A 564-amino-acid polypeptide reads, in one-letter code: Beta-N-acetylglucosaminidase/beta-glucosidase (564 aa).

Aspartate 283 functions as the Nucleophile in the catalytic mechanism.

Belongs to the glycosyl hydrolase 3 family.

It carries out the reaction Hydrolysis of terminal non-reducing N-acetyl-D-hexosamine residues in N-acetyl-beta-D-hexosaminides.. The catalysed reaction is Hydrolysis of terminal, non-reducing beta-D-glucosyl residues with release of beta-D-glucose.. Its function is as follows. Catalyzes the cleavage of beta-N-acetyl-D-glucosaminides and beta-D-glucosides. Might be involved in the degradation of glucuronic acid-containing glycosaminoglycans such as hyaluronic acid. This chain is Beta-N-acetylglucosaminidase/beta-glucosidase (nag3), found in Cellulomonas fimi.